A 251-amino-acid chain; its full sequence is Ubiquinone/menaquinone biosynthesis C-methyltransferase UbiE (251 aa).

S-adenosyl-L-methionine is bound by residues T74, D95, N123–A124, and S140.

The protein belongs to the class I-like SAM-binding methyltransferase superfamily. MenG/UbiE family.

The enzyme catalyses a 2-demethylmenaquinol + S-adenosyl-L-methionine = a menaquinol + S-adenosyl-L-homocysteine + H(+). The catalysed reaction is a 2-methoxy-6-(all-trans-polyprenyl)benzene-1,4-diol + S-adenosyl-L-methionine = a 5-methoxy-2-methyl-3-(all-trans-polyprenyl)benzene-1,4-diol + S-adenosyl-L-homocysteine + H(+). Its pathway is quinol/quinone metabolism; menaquinone biosynthesis; menaquinol from 1,4-dihydroxy-2-naphthoate: step 2/2. The protein operates within cofactor biosynthesis; ubiquinone biosynthesis. Methyltransferase required for the conversion of demethylmenaquinol (DMKH2) to menaquinol (MKH2) and the conversion of 2-polyprenyl-6-methoxy-1,4-benzoquinol (DDMQH2) to 2-polyprenyl-3-methyl-6-methoxy-1,4-benzoquinol (DMQH2). This chain is Ubiquinone/menaquinone biosynthesis C-methyltransferase UbiE, found in Yersinia pestis bv. Antiqua (strain Angola).